The sequence spans 505 residues: ATP synthase subunit alpha, chloroplastic (505 aa).

An ATP-binding site is contributed by 172-179; sequence GDRQTGKT.

The protein belongs to the ATPase alpha/beta chains family. F-type ATPases have 2 components, CF(1) - the catalytic core - and CF(0) - the membrane proton channel. CF(1) has five subunits: alpha(3), beta(3), gamma(1), delta(1), epsilon(1). CF(0) has four main subunits: a, b, b' and c.

Its subcellular location is the plastid. The protein resides in the chloroplast thylakoid membrane. It catalyses the reaction ATP + H2O + 4 H(+)(in) = ADP + phosphate + 5 H(+)(out). Produces ATP from ADP in the presence of a proton gradient across the membrane. The alpha chain is a regulatory subunit. This Antithamnion sp. (Red alga) protein is ATP synthase subunit alpha, chloroplastic.